Reading from the N-terminus, the 70-residue chain is Protein SlyX homolog (70 aa).

This sequence belongs to the SlyX family.

This Rhizobium meliloti (strain 1021) (Ensifer meliloti) protein is Protein SlyX homolog.